The chain runs to 112 residues: Cytochrome c6 (112 aa).

A signal peptide spans 1–25; it reads MKKRFISVCAIAIALLVSLTPAALA. Heme c contacts are provided by Cys-39, Cys-42, His-43, and Met-83.

The protein belongs to the cytochrome c family. PetJ subfamily. As to quaternary structure, monomer. Binds 1 heme c group covalently per subunit.

It localises to the cellular thylakoid lumen. Functionally, functions as an electron carrier between membrane-bound cytochrome b6-f and photosystem I in oxygenic photosynthesis. This chain is Cytochrome c6 (petJ), found in Thermosynechococcus vestitus (strain NIES-2133 / IAM M-273 / BP-1).